The sequence spans 157 residues: MTMRYIIKRKIYWTKEFDSSHFLELEYESKCKRIHGHTYKVEVEIEGELNEEGMIFDFTHLSEIVKELDHRLIVSKEWVKEVGDLVIIEKNRKILKVPRDEVVIIDKPNVTAEYLAEWFGERIAENAGSNIKKIKVRIWEDPRSYAEVTFTLEPQGS.

His-21 contributes to the Zn(2+) binding site. Cys-31 acts as the Proton acceptor in catalysis. Zn(2+) contacts are provided by His-35 and His-37. Catalysis depends on charge relay system residues His-70 and Glu-140.

This sequence belongs to the PTPS family. QueD subfamily. The cofactor is Zn(2+).

The catalysed reaction is 7,8-dihydroneopterin 3'-triphosphate + H2O = 6-carboxy-5,6,7,8-tetrahydropterin + triphosphate + acetaldehyde + 2 H(+). The protein operates within purine metabolism; 7-cyano-7-deazaguanine biosynthesis. Functionally, catalyzes the conversion of 7,8-dihydroneopterin triphosphate (H2NTP) to 6-carboxy-5,6,7,8-tetrahydropterin (CPH4) and acetaldehyde. This chain is Putative 6-carboxy-5,6,7,8-tetrahydropterin synthase (queD), found in Pyrococcus horikoshii (strain ATCC 700860 / DSM 12428 / JCM 9974 / NBRC 100139 / OT-3).